Reading from the N-terminus, the 111-residue chain is Rho GDP-dissociation inhibitor 1 (111 aa).

Residues lysine 57 and lysine 60 each participate in a glycyl lysine isopeptide (Lys-Gly) (interchain with G-Cter in SUMO1); alternate cross-link. Glycyl lysine isopeptide (Lys-Gly) (interchain with G-Cter in SUMO2); alternate cross-links involve residues lysine 57 and lysine 60. Lysine 60 bears the N6-acetyllysine; alternate mark. Residue lysine 60 is modified to N6-succinyllysine; alternate.

The protein belongs to the Rho GDI family. Monomer. Interacts with FER. Interacts with PLXNB3. Forms a heterodimer with RAC1. Interacts with RHOA, the affinity is increased by three orders of magnitude when RHOA is prenylated. Interacts with PSMD10; the interaction increases ARHGDIA association with RHOA, leading to ARHGDIA-mediated inactivation of RHOA and ROCK and prolonged AKT activation. Interacts with KANK2; the interaction is direct and may regulate the interaction of ARHGDIA with RHOA, RAC1 and CDC42. Interacts with RHOC. Interacts with CDC42. Interacts with NGFR (via death domain); NGFR binding decreases the affinity for RHOA. The N-terminus is blocked.

It localises to the cytoplasm. Its function is as follows. Controls Rho proteins homeostasis. Regulates the GDP/GTP exchange reaction of the Rho proteins by inhibiting the dissociation of GDP from them, and the subsequent binding of GTP to them. Retains Rho proteins such as CDC42, RAC1 and RHOA in an inactive cytosolic pool, regulating their stability and protecting them from degradation. Actively involved in the recycling and distribution of activated Rho GTPases in the cell, mediates extraction from membranes of both inactive and activated molecules due its exceptionally high affinity for prenylated forms. Through the modulation of Rho proteins, may play a role in cell motility regulation. In glioma cells, inhibits cell migration and invasion by mediating the signals of SEMA5A and PLXNB3 that lead to inactivation of RAC1. The chain is Rho GDP-dissociation inhibitor 1 (ARHGDIA) from Cavia porcellus (Guinea pig).